We begin with the raw amino-acid sequence, 531 residues long: Peptide chain release factor 3 (531 aa).

The tr-type G domain occupies 10–278 (RRRRTFAIIS…SLIDWAPAPK (269 aa)). GTP contacts are provided by residues 19–26 (SHPDAGKT), 87–91 (DTPGH), and 141–144 (NKYD).

Belongs to the TRAFAC class translation factor GTPase superfamily. Classic translation factor GTPase family. PrfC subfamily.

It localises to the cytoplasm. Functionally, increases the formation of ribosomal termination complexes and stimulates activities of RF-1 and RF-2. It binds guanine nucleotides and has strong preference for UGA stop codons. It may interact directly with the ribosome. The stimulation of RF-1 and RF-2 is significantly reduced by GTP and GDP, but not by GMP. The sequence is that of Peptide chain release factor 3 from Neisseria meningitidis serogroup C / serotype 2a (strain ATCC 700532 / DSM 15464 / FAM18).